The following is a 262-amino-acid chain: Putative ankyrin repeat protein FPV243 (262 aa).

The ANK repeat unit spans residues 25–54 (YGSTPLFEAICNCSCKNVKLFLENNADINE).

This chain is Putative ankyrin repeat protein FPV243, found in Vertebrata (FPV).